We begin with the raw amino-acid sequence, 300 residues long: Cutinase est2 (300 aa).

The signal sequence occupies residues 1 to 39 (MSVTTPRRETSLLSRALRATAAAATAVVATVALAAPAQA). Tyr99 is a poly(ethylene terephthalate) binding site. Residue Ser169 is the Nucleophile of the active site. Met170 and Trp194 together coordinate poly(ethylene terephthalate). Residue Glu213 coordinates Ca(2+). The active-site Charge relay system is the Asp215. Asp243 lines the Ca(2+) pocket. His247 (charge relay system) is an active-site residue. A disulfide bridge links Cys280 with Cys298. Glu292 is a Ca(2+) binding site.

Belongs to the AB hydrolase superfamily. In terms of assembly, monomer. The cofactor is Ca(2+).

The protein localises to the secreted. It localises to the periplasm. The enzyme catalyses an acetyl ester + H2O = an aliphatic alcohol + acetate + H(+). It carries out the reaction (ethylene terephthalate)(n) + H2O = (ethylene terephthalate)(n-1) + 4-[(2-hydroxyethoxy)carbonyl]benzoate + H(+). It catalyses the reaction a butanoate ester + H2O = an aliphatic alcohol + butanoate + H(+). The catalysed reaction is cutin + H2O = cutin monomers.. The enzyme catalyses a hexanoate ester + H2O = an aliphatic alcohol + hexanoate + H(+). It carries out the reaction an octanoate ester + H2O = an aliphatic alcohol + octanoate + H(+). Activated by calcium ions. Activated by magnesium ions. Activated by manganese ions. Inhibited by the serine hydrolase inhibitor phenylmethanesulfonyl fluoride (PMSF). Inhibited by the chelator ethylenediaminetetraacetic acid (EDTA). Inhibited by iron ions. Inhibited by aluminum ions. Inhibited by rubidium ions. Inhibited by lithium ions. In terms of biological role, catalyzes the hydrolysis of cutin, a polyester that forms the structure of plant cuticle. Shows esterase activity towards p-nitrophenol-linked aliphatic esters (pNP-aliphatic esters). Capable of degrading the plastic poly(ethylene terephthalate) (PET), the most abundant polyester plastic in the world. Can also depolymerize the synthetic polyesters poly(epsilon-caprolactone) (PCL), poly(butylene succinate-co-adipate) (PBSA), poly(butylene succinate) (PBS), and poly(lactic acid) (PLA). The polypeptide is Cutinase est2 (Thermobifida alba (Thermomonospora alba)).